A 452-amino-acid chain; its full sequence is Tylactone mycaminosyltransferase (452 aa).

A compositionally biased stretch (basic and acidic residues) spans 1-16 (MRRALDDRRRGPHGPE). Residues 1–20 (MRRALDDRRRGPHGPEGKPP) form a disordered region.

This sequence belongs to the glycosyltransferase 28 family.

It carries out the reaction tylactone + dTDP-alpha-D-mycaminose = 5-O-beta-D-mycaminosyltylactone + dTDP + H(+). It functions in the pathway antibiotic biosynthesis; tylosin biosynthesis. With respect to regulation, the activity of TylM2 is substantially increased by the addition of the accessory protein TylM3. Functionally, involved in the biosynthesis of the macrolide antibiotic tylosin derived from the polyketide lactone tylactone. Catalyzes the transfer of alpha-D-mycaminosyl from dTDP-alpha-D-mycaminose to the 5-hydroxyl group of tylactone to yield 5-O-mycaminosytylactone. It can also accept 16-membered tylactone and 12-membered ring macrolide. This Streptomyces fradiae (Streptomyces roseoflavus) protein is Tylactone mycaminosyltransferase.